A 158-amino-acid polypeptide reads, in one-letter code: N-acetylgalactosamine-specific phosphotransferase enzyme IIB component 1 (158 aa).

The PTS EIIB type-4 domain occupies 1–158 (MTSPNILLTR…PGDQKEQIPD (158 aa)). The Pros-phosphohistidine intermediate role is filled by histidine 17.

It localises to the cytoplasm. In terms of biological role, the phosphoenolpyruvate-dependent sugar phosphotransferase system (sugar PTS), a major carbohydrate active -transport system, catalyzes the phosphorylation of incoming sugar substrates concomitantly with their translocation across the cell membrane. This system is involved in N-acetylgalactosamine transport. The polypeptide is N-acetylgalactosamine-specific phosphotransferase enzyme IIB component 1 (agaB) (Escherichia coli (strain K12)).